We begin with the raw amino-acid sequence, 154 residues long: Large ribosomal subunit protein uL23y (154 aa).

It belongs to the universal ribosomal protein uL23 family.

In terms of biological role, binds to a specific region on the 26S rRNA. This Arabidopsis thaliana (Mouse-ear cress) protein is Large ribosomal subunit protein uL23y (RPL23AB).